The following is a 134-amino-acid chain: UPF0412 protein YaaI (134 aa).

The first 23 residues, 1-23 (MKSVFTISASLAISLMLCCTAQA), serve as a signal peptide directing secretion.

The protein belongs to the UPF0412 family.

This chain is UPF0412 protein YaaI, found in Shigella dysenteriae serotype 1 (strain Sd197).